Consider the following 416-residue polypeptide: Serine hydroxymethyltransferase (416 aa).

(6S)-5,6,7,8-tetrahydrofolate-binding positions include L120 and G124–L126. K230 is subject to N6-(pyridoxal phosphate)lysine. E246 is a binding site for (6S)-5,6,7,8-tetrahydrofolate.

The protein belongs to the SHMT family. In terms of assembly, homodimer. It depends on pyridoxal 5'-phosphate as a cofactor.

The protein resides in the cytoplasm. It carries out the reaction (6R)-5,10-methylene-5,6,7,8-tetrahydrofolate + glycine + H2O = (6S)-5,6,7,8-tetrahydrofolate + L-serine. The protein operates within one-carbon metabolism; tetrahydrofolate interconversion. It participates in amino-acid biosynthesis; glycine biosynthesis; glycine from L-serine: step 1/1. Functionally, catalyzes the reversible interconversion of serine and glycine with tetrahydrofolate (THF) serving as the one-carbon carrier. This reaction serves as the major source of one-carbon groups required for the biosynthesis of purines, thymidylate, methionine, and other important biomolecules. Also exhibits THF-independent aldolase activity toward beta-hydroxyamino acids, producing glycine and aldehydes, via a retro-aldol mechanism. The chain is Serine hydroxymethyltransferase from Onion yellows phytoplasma (strain OY-M).